We begin with the raw amino-acid sequence, 340 residues long: N-acetyl-gamma-glutamyl-phosphate reductase (340 aa).

The active site involves Cys-146.

The protein belongs to the NAGSA dehydrogenase family. Type 1 subfamily.

The protein localises to the cytoplasm. The enzyme catalyses N-acetyl-L-glutamate 5-semialdehyde + phosphate + NADP(+) = N-acetyl-L-glutamyl 5-phosphate + NADPH + H(+). It participates in amino-acid biosynthesis; L-arginine biosynthesis; N(2)-acetyl-L-ornithine from L-glutamate: step 3/4. In terms of biological role, catalyzes the NADPH-dependent reduction of N-acetyl-5-glutamyl phosphate to yield N-acetyl-L-glutamate 5-semialdehyde. The protein is N-acetyl-gamma-glutamyl-phosphate reductase of Streptococcus thermophilus (strain CNRZ 1066).